An 87-amino-acid chain; its full sequence is Small ribosomal subunit protein uS17 (87 aa).

It belongs to the universal ribosomal protein uS17 family. In terms of assembly, part of the 30S ribosomal subunit.

One of the primary rRNA binding proteins, it binds specifically to the 5'-end of 16S ribosomal RNA. The protein is Small ribosomal subunit protein uS17 of Anoxybacillus flavithermus (strain DSM 21510 / WK1).